An 83-amino-acid chain; its full sequence is Small ribosomal subunit protein eS21 (83 aa).

Belongs to the eukaryotic ribosomal protein eS21 family. As to quaternary structure, component of the 40S small ribosomal subunit. Interacts with sta.

It is found in the cytoplasm. Its subcellular location is the cytosol. The protein resides in the rough endoplasmic reticulum. May be an associated component of the ribosome rather than a core structural subunit. May act as a translation initiation factor. Has a role in regulation of cell proliferation in the hematopoietic organs and the imaginal disks of larva. The protein is Small ribosomal subunit protein eS21 (RpS21) of Drosophila erecta (Fruit fly).